The following is a 166-amino-acid chain: Mitochondrial inner membrane protease subunit 1 (166 aa).

Residues S40 and K83 contribute to the active site.

The protein belongs to the peptidase S26 family. IMP1 subfamily. As to quaternary structure, heterodimer of 2 subunits, IMMPL1 and IMMPL2.

Its subcellular location is the mitochondrion inner membrane. Functionally, catalyzes the removal of transit peptides required for the targeting of proteins from the mitochondrial matrix, across the inner membrane, into the inter-membrane space. Known to process the nuclear encoded protein DIABLO. This chain is Mitochondrial inner membrane protease subunit 1 (Immp1l), found in Mus musculus (Mouse).